The following is a 296-amino-acid chain: Nucleotide-binding protein SPT_1506 (296 aa).

13–20 (GMSGAGKT) provides a ligand contact to ATP. 63–66 (DMRS) provides a ligand contact to GTP.

This sequence belongs to the RapZ-like family.

In terms of biological role, displays ATPase and GTPase activities. This Streptococcus pneumoniae (strain Taiwan19F-14) protein is Nucleotide-binding protein SPT_1506.